Consider the following 197-residue polypeptide: Phosphoheptose isomerase (197 aa).

One can recognise an SIS domain in the interval 34-196 (MVHCLLSGNK…DHTLFPQDEQ (163 aa)). Substrate is bound at residue 49–51 (NGG). 2 residues coordinate Zn(2+): His58 and Glu62. Substrate contacts are provided by residues Glu62, 91 to 92 (ND), 117 to 119 (STS), Ser122, and Gln172. Zn(2+)-binding residues include Gln172 and His180.

It belongs to the SIS family. GmhA subfamily. Homotetramer. Zn(2+) is required as a cofactor.

It is found in the cytoplasm. The enzyme catalyses 2 D-sedoheptulose 7-phosphate = D-glycero-alpha-D-manno-heptose 7-phosphate + D-glycero-beta-D-manno-heptose 7-phosphate. It functions in the pathway carbohydrate biosynthesis; D-glycero-D-manno-heptose 7-phosphate biosynthesis; D-glycero-alpha-D-manno-heptose 7-phosphate and D-glycero-beta-D-manno-heptose 7-phosphate from sedoheptulose 7-phosphate: step 1/1. In terms of biological role, catalyzes the isomerization of sedoheptulose 7-phosphate in D-glycero-D-manno-heptose 7-phosphate. The polypeptide is Phosphoheptose isomerase (Shewanella halifaxensis (strain HAW-EB4)).